Here is a 212-residue protein sequence, read N- to C-terminus: 3-demethoxyubiquinol 3-hydroxylase (212 aa).

Residues E61, E91, H94, E143, E175, and H178 each contribute to the Fe cation site.

It belongs to the COQ7 family. Requires Fe cation as cofactor.

The protein localises to the cell membrane. It catalyses the reaction a 5-methoxy-2-methyl-3-(all-trans-polyprenyl)benzene-1,4-diol + AH2 + O2 = a 3-demethylubiquinol + A + H2O. It functions in the pathway cofactor biosynthesis; ubiquinone biosynthesis. Catalyzes the hydroxylation of 2-nonaprenyl-3-methyl-6-methoxy-1,4-benzoquinol during ubiquinone biosynthesis. The sequence is that of 3-demethoxyubiquinol 3-hydroxylase from Paraburkholderia phytofirmans (strain DSM 17436 / LMG 22146 / PsJN) (Burkholderia phytofirmans).